Reading from the N-terminus, the 344-residue chain is Adenosine kinase 1 (344 aa).

The active site involves aspartate 299.

This sequence belongs to the carbohydrate kinase PfkB family. As to quaternary structure, interacts with the begomovirus AL2 protein and the curtovirus L2 protein. Requires Mg(2+) as cofactor. In terms of tissue distribution, widely expressed.

It catalyses the reaction adenosine + ATP = AMP + ADP + H(+). Its pathway is purine metabolism; AMP biosynthesis via salvage pathway; AMP from adenosine: step 1/1. Its activity is regulated as follows. Inactivated by the begomovirus AL2 protein or the curtovirus L2 protein. Its function is as follows. ATP dependent phosphorylation of adenosine and other related nucleoside analogs to monophosphate derivatives. Essential to sustain methyl recycling. The polypeptide is Adenosine kinase 1 (Arabidopsis thaliana (Mouse-ear cress)).